A 407-amino-acid polypeptide reads, in one-letter code: GTPase Obg (407 aa).

Residues 1 to 159 enclose the Obg domain; it reads MKFVDEVSIR…RDLKLEMKVL (159 aa). Positions 128-148 are disordered; the sequence is TRFKSSTNRAPRQTTPGKPGE. The span at 129–143 shows a compositional bias: polar residues; the sequence is RFKSSTNRAPRQTTP. Residues 160–333 enclose the OBG-type G domain; the sequence is ADVGLLGLPN…LTRDIMRYLE (174 aa). GTP contacts are provided by residues 166–173, 191–195, 213–216, 283–286, and 314–316; these read GLPNAGKS, FTTLV, DIPG, NKCD, and SAI. Mg(2+) is bound by residues serine 173 and threonine 193. The tract at residues 376–407 is disordered; sequence SGVKSVHDIGDDDWDEEDVDDEDGPEIIYVRD. Positions 385–400 are enriched in acidic residues; that stretch reads GDDDWDEEDVDDEDGP.

It belongs to the TRAFAC class OBG-HflX-like GTPase superfamily. OBG GTPase family. In terms of assembly, monomer. The cofactor is Mg(2+).

The protein localises to the cytoplasm. In terms of biological role, an essential GTPase which binds GTP, GDP and possibly (p)ppGpp with moderate affinity, with high nucleotide exchange rates and a fairly low GTP hydrolysis rate. Plays a role in control of the cell cycle, stress response, ribosome biogenesis and in those bacteria that undergo differentiation, in morphogenesis control. The protein is GTPase Obg of Pseudomonas fluorescens (strain Pf0-1).